A 145-amino-acid polypeptide reads, in one-letter code: 3-hydroxyacyl-[acyl-carrier-protein] dehydratase FabZ (145 aa).

Residue histidine 48 is part of the active site.

It belongs to the thioester dehydratase family. FabZ subfamily.

It is found in the cytoplasm. It catalyses the reaction a (3R)-hydroxyacyl-[ACP] = a (2E)-enoyl-[ACP] + H2O. In terms of biological role, involved in unsaturated fatty acids biosynthesis. Catalyzes the dehydration of short chain beta-hydroxyacyl-ACPs and long chain saturated and unsaturated beta-hydroxyacyl-ACPs. The chain is 3-hydroxyacyl-[acyl-carrier-protein] dehydratase FabZ from Marinomonas sp. (strain MWYL1).